We begin with the raw amino-acid sequence, 91 residues long: Acylphosphatase (91 aa).

The Acylphosphatase-like domain maps to Ala3–Ala89. Residues Arg18 and Asn36 contribute to the active site.

It belongs to the acylphosphatase family.

The catalysed reaction is an acyl phosphate + H2O = a carboxylate + phosphate + H(+). In Acidiphilium cryptum (strain JF-5), this protein is Acylphosphatase (acyP).